Reading from the N-terminus, the 174-residue chain is Dual-action ribosomal maturation protein DarP (174 aa).

This sequence belongs to the DarP family.

The protein localises to the cytoplasm. Functionally, member of a network of 50S ribosomal subunit biogenesis factors which assembles along the 30S-50S interface, preventing incorrect 23S rRNA structures from forming. Promotes peptidyl transferase center (PTC) maturation. The protein is Dual-action ribosomal maturation protein DarP of Pseudomonas aeruginosa (strain LESB58).